Here is a 29-residue protein sequence, read N- to C-terminus: Scolopendra 8011.73 Da toxin (29 aa).

As to expression, expressed by the venom gland.

The protein resides in the secreted. This chain is Scolopendra 8011.73 Da toxin, found in Scolopendra viridicornis nigra (Brazilian giant centipede).